The following is a 491-amino-acid chain: Cysteine--tRNA ligase (491 aa).

Cys31 contributes to the Zn(2+) binding site. The short motif at 33-43 (PTVYGDAHLGH) is the 'HIGH' region element. Residues Cys226, His251, and Glu255 each contribute to the Zn(2+) site. Residues 283–287 (KMGKS) carry the 'KMSKS' region motif. Residue Lys286 participates in ATP binding.

Belongs to the class-I aminoacyl-tRNA synthetase family. Monomer. Zn(2+) is required as a cofactor.

It localises to the cytoplasm. The catalysed reaction is tRNA(Cys) + L-cysteine + ATP = L-cysteinyl-tRNA(Cys) + AMP + diphosphate. In Parabacteroides distasonis (strain ATCC 8503 / DSM 20701 / CIP 104284 / JCM 5825 / NCTC 11152), this protein is Cysteine--tRNA ligase.